The chain runs to 466 residues: Ribulose bisphosphate carboxylase large chain (466 aa).

Lys5 carries the N6,N6,N6-trimethyllysine modification. Substrate-binding residues include Asn114 and Thr164. The Proton acceptor role is filled by Lys166. Lys168 is a substrate binding site. Positions 192, 194, and 195 each coordinate Mg(2+). Lys192 is subject to N6-carboxylysine. His285 acts as the Proton acceptor in catalysis. Residues Arg286, His318, and Ser370 each contribute to the substrate site.

Belongs to the RuBisCO large chain family. Type I subfamily. As to quaternary structure, heterohexadecamer of 8 large chains and 8 small chains; disulfide-linked. The disulfide link is formed within the large subunit homodimers. It depends on Mg(2+) as a cofactor. In terms of processing, the disulfide bond which can form in the large chain dimeric partners within the hexadecamer appears to be associated with oxidative stress and protein turnover.

It localises to the plastid. It is found in the chloroplast. It carries out the reaction 2 (2R)-3-phosphoglycerate + 2 H(+) = D-ribulose 1,5-bisphosphate + CO2 + H2O. It catalyses the reaction D-ribulose 1,5-bisphosphate + O2 = 2-phosphoglycolate + (2R)-3-phosphoglycerate + 2 H(+). Functionally, ruBisCO catalyzes two reactions: the carboxylation of D-ribulose 1,5-bisphosphate, the primary event in carbon dioxide fixation, as well as the oxidative fragmentation of the pentose substrate in the photorespiration process. Both reactions occur simultaneously and in competition at the same active site. In Asarum canadense (Wild ginger), this protein is Ribulose bisphosphate carboxylase large chain.